A 58-amino-acid polypeptide reads, in one-letter code: Large ribosomal subunit protein uL30 (58 aa).

It belongs to the universal ribosomal protein uL30 family. In terms of assembly, part of the 50S ribosomal subunit.

The chain is Large ribosomal subunit protein uL30 from Cytophaga hutchinsonii (strain ATCC 33406 / DSM 1761 / CIP 103989 / NBRC 15051 / NCIMB 9469 / D465).